Here is a 112-residue protein sequence, read N- to C-terminus: UPF0122 protein CPE1714 (112 aa).

It belongs to the UPF0122 family.

In terms of biological role, might take part in the signal recognition particle (SRP) pathway. This is inferred from the conservation of its genetic proximity to ftsY/ffh. May be a regulatory protein. This chain is UPF0122 protein CPE1714, found in Clostridium perfringens (strain 13 / Type A).